The sequence spans 232 residues: 7-cyano-7-deazaguanine synthase (232 aa).

Phe8 to Leu18 is an ATP binding site. Zn(2+) is bound by residues Cys187, Cys196, Cys199, and Cys202.

This sequence belongs to the QueC family. The cofactor is Zn(2+).

It carries out the reaction 7-carboxy-7-deazaguanine + NH4(+) + ATP = 7-cyano-7-deazaguanine + ADP + phosphate + H2O + H(+). Its pathway is purine metabolism; 7-cyano-7-deazaguanine biosynthesis. Catalyzes the ATP-dependent conversion of 7-carboxy-7-deazaguanine (CDG) to 7-cyano-7-deazaguanine (preQ(0)). The polypeptide is 7-cyano-7-deazaguanine synthase (Shewanella denitrificans (strain OS217 / ATCC BAA-1090 / DSM 15013)).